Consider the following 237-residue polypeptide: MLGGSLGSRLLRGVGGSHGRFGARGVREGGAAMAAGESMAQRMVWVDLEMTGLDIEKDQIIEMACLITDSDLNILAEGPNLIIKQPDELLDSMSDWCKEHHGKSGLTKAVKESTITLQQAEYEFLSFVRQQTPPGLCPLAGNSVHEDKKFLDKYMPQFMKHLHYRIIDVSTVKELCRRWYPEEYEFAPKKAASHRALDDISESIKELQFYRNNIFKKKIDEKKRKIIENGENEKTVS.

The N-terminal 25 residues, 1 to 25 (MLGGSLGSRLLRGVGGSHGRFGARG), are a transit peptide targeting the mitochondrion. The region spanning 43–207 (MVWVDLEMTG…DDISESIKEL (165 aa)) is the Exonuclease domain. 2 residues coordinate Mg(2+): Asp47 and Glu49. Phosphoserine is present on Ser92. Tyr122 bears the Phosphotyrosine mark. Asp147 contributes to the Mg(2+) binding site. Residue Lys173 is modified to N6-acetyllysine. His194 is a catalytic residue. Asp199 contacts Mg(2+).

The protein belongs to the oligoribonuclease family. As to quaternary structure, homodimer. Homotetramer. Requires Mn(2+) as cofactor. It depends on Mg(2+) as a cofactor. As to expression, highly expressed in the heart and at lower levels in the lymph nodes, brain, lung, liver, spleen and thymus.

The protein localises to the mitochondrion intermembrane space. Its subcellular location is the mitochondrion matrix. It localises to the mitochondrion. It is found in the cytoplasm. The protein resides in the nucleus. Inhibited by adenosine 3',5'-bisphosphate. 3'-to-5'exoribonuclease that preferentially degrades DNA and RNA oligonucleotides composed of only two nucleotides. Binds and degrades longer oligonucleotides with a lower affinity. Plays dual roles in mitochondria, scavenging nanoRNAs (small RNA oligonucleotides of &lt;5 nucleotides) that are produced by the degradosome and clearing short RNAs that are generated by RNA processing. Essential for correct initiation of mitochondrial transcription, degrading mitochondrial RNA dinucleotides to prevent RNA-primed transcription at non-canonical sites in the mitochondrial genome. Essential for embryonic development. Its function is as follows. 3'-to-5'exoribonuclease that preferentially degrades DNA and RNA oligonucleotides composed of only two nucleotides. The sequence is that of Oligoribonuclease, mitochondrial (REXO2) from Homo sapiens (Human).